The chain runs to 280 residues: Homeobox protein SMOX-1 (280 aa).

Residues 61 to 88 (PNNNSFQLNTTNDSNNNNTTNNGNDSRS) form a disordered region. Residues 69-85 (NTTNDSNNNNTTNNGND) are compositionally biased toward low complexity. The Antp-type hexapeptide signature appears at 214–219 (VYPWMN). Residues 229–280 (QKRTRQTYTRYQTLELEKEFHFNKYLTRRRRIEIAHTLTLTERQIKIWFQNR) constitute a DNA-binding region (homeobox).

This sequence belongs to the Antp homeobox family.

It is found in the nucleus. The polypeptide is Homeobox protein SMOX-1 (SMOX-1) (Schistosoma mansoni (Blood fluke)).